A 313-amino-acid chain; its full sequence is Solute carrier family 35 member E3 (313 aa).

The next 10 membrane-spanning stretches (helical) occupy residues glycine 17–valine 37, glycine 40–valine 60, leucine 77–asparagine 97, isoleucine 100–leucine 120, isoleucine 130–tyrosine 147, phenylalanine 153–valine 173, leucine 187–phenylalanine 206, leucine 225–isoleucine 245, threonine 252–phenylalanine 272, and proline 275–threonine 295.

The protein belongs to the TPT transporter family. SLC35E subfamily.

It localises to the membrane. Its function is as follows. Putative transporter. This Bos taurus (Bovine) protein is Solute carrier family 35 member E3 (SLC35E3).